The chain runs to 572 residues: Cuticlin-6 (572 aa).

The first 24 residues, 1–24 (MRPIPYDISLSITSFLSLILICSA), serve as a signal peptide directing secretion. Residues 25-541 (NPIDNGLVDS…PLPYPLINTN (517 aa)) are Extracellular-facing. Residues 47–216 (EVILLLDASG…QLDRALADSL (170 aa)) enclose the VWFA domain. N-linked (GlcNAc...) asparagine glycosylation occurs at asparagine 78. In terms of domain architecture, ZP spans 233–479 (ICGPDRIGVK…GGCEGITPPQ (247 aa)). The chain crosses the membrane as a helical span at residues 542–562 (LWIMGIITLTNIFVFILTVWF). Residues 563-572 (TFRKRRCKPA) lie on the Cytoplasmic side of the membrane.

It is found in the cell membrane. Its function is as follows. Plays a role in alae formation in dauer larvae probably by regulating cuticle assembly. This Caenorhabditis elegans protein is Cuticlin-6.